Consider the following 436-residue polypeptide: UPF0597 protein YhaM (436 aa).

It belongs to the UPF0597 family.

In Escherichia coli (strain 55989 / EAEC), this protein is UPF0597 protein YhaM.